The following is a 231-amino-acid chain: Platelet-activating factor acetylhydrolase IB subunit alpha1 (231 aa).

Ser2 is modified (N-acetylserine). Ser2 bears the Phosphoserine mark. Catalysis depends on residues Ser47, Asp192, and His195.

Belongs to the 'GDSL' lipolytic enzyme family. Platelet-activating factor acetylhydrolase IB beta/gamma subunits subfamily. Forms a catalytic dimer which is either homodimer (alpha1/alpha1 homodimer) or heterodimer with PAFAH1B2 (alpha1/alpha2 heterodimer). Component of the cytosolic (PAF-AH (I)) heterotetrameric enzyme, which is composed of PAFAH1B1 (beta), PAFAH1B2 (alpha2) and PAFAH1B3 (alpha1) subunits. The catalytic activity of the enzyme resides in the alpha1 (PAFAH1B3) and alpha2 (PAFAH1B2) subunits, whereas the beta subunit (PAFAH1B1) has regulatory activity. Trimer formation is not essential for the catalytic activity. Interacts with VLDLR; this interaction may modulate the Reelin pathway.

It is found in the cytoplasm. It carries out the reaction a 1-O-alkyl-2-acetyl-sn-glycero-3-phosphocholine + H2O = a 1-O-alkyl-sn-glycero-3-phosphocholine + acetate + H(+). It catalyses the reaction 1-O-hexadecyl-2-acetyl-sn-glycero-3-phosphocholine + H2O = 1-O-hexadecyl-sn-glycero-3-phosphocholine + acetate + H(+). The enzyme catalyses 1-O-hexadecyl-2-acetyl-sn-glycero-3-phosphate + H2O = 1-O-hexadecyl-sn-glycero-3-phosphate + acetate + H(+). Beta subunit (PAFAH1B1) inhibits the acetylhydrolase activity of the alpha1/alpha1 catalytic homodimer. Alpha1 catalytic subunit of the cytosolic type I platelet-activating factor (PAF) acetylhydrolase (PAF-AH (I)) heterotetrameric enzyme that catalyzes the hydrolyze of the acetyl group at the sn-2 position of PAF and its analogs and modulates the action of PAF. The activity and substrate specificity of PAF-AH (I) are affected by its subunit composition. Both alpha1/alpha1 homodimer (PAFAH1B3/PAFAH1B3 homodimer) and alpha1/alpha2 heterodimer(PAFAH1B3/PAFAH1B2 heterodimer) hydrolyze 1-O-alkyl-2-acetyl-sn-glycero-3-phosphoric acid (AAGPA) more efficiently than PAF, but they have little hydrolytic activity towards 1-O-alkyl-2-acetyl-sn-glycero-3-phosphorylethanolamine (AAGPE). Plays an important role during the development of brain. The chain is Platelet-activating factor acetylhydrolase IB subunit alpha1 from Pongo abelii (Sumatran orangutan).